Here is a 233-residue protein sequence, read N- to C-terminus: ATP synthase subunit a 2 (233 aa).

A run of 5 helical transmembrane segments spans residues 15–35 (FVVI…LVIG), 78–98 (YLAF…LTVV), 107–127 (SLST…IYGI), 169–189 (IMSG…FVPV), and 194–214 (LGLV…LVYI).

The protein belongs to the ATPase A chain family. F-type ATPases have 2 components, CF(1) - the catalytic core - and CF(0) - the membrane proton channel. CF(1) has five subunits: alpha(3), beta(3), gamma(1), delta(1), epsilon(1). CF(0) has four main subunits: a, b, b' and c.

Its subcellular location is the cellular thylakoid membrane. Its function is as follows. Key component of the proton channel; it plays a direct role in the translocation of protons across the membrane. This Picosynechococcus sp. (strain ATCC 27264 / PCC 7002 / PR-6) (Agmenellum quadruplicatum) protein is ATP synthase subunit a 2.